The sequence spans 177 residues: Hypoxanthine phosphoribosyltransferase (177 aa).

Diphosphate is bound by residues Arg-43 and Gly-44. GMP is bound at residue Glu-99. Glu-99 provides a ligand contact to IMP. Residues Glu-99 and Asp-100 each contribute to the Mg(2+) site. Asp-103 acts as the Proton acceptor in catalysis. GMP contacts are provided by residues Asp-103–Leu-108, Lys-131, and Asp-159. Residues Asp-103–Leu-108 and Lys-131 each bind IMP. Arg-165 lines the diphosphate pocket.

The protein belongs to the purine/pyrimidine phosphoribosyltransferase family. In terms of assembly, homotetramer. Requires Mg(2+) as cofactor.

It localises to the cytoplasm. It carries out the reaction IMP + diphosphate = hypoxanthine + 5-phospho-alpha-D-ribose 1-diphosphate. The enzyme catalyses GMP + diphosphate = guanine + 5-phospho-alpha-D-ribose 1-diphosphate. It participates in purine metabolism; IMP biosynthesis via salvage pathway; IMP from hypoxanthine: step 1/1. In terms of biological role, purine salvage pathway enzyme which catalyzes the transfer of the ribosyl-5-phosphate group from 5-phospho-alpha-D-ribose 1-diphosphate (PRPP) to the N9 position of hypoxanthine to yield IMP (inosine 5'-monophosphate). To a lesser extent, can also act on guanine leading to GMP, but shows a highly less efficient activity with xanthine. The polypeptide is Hypoxanthine phosphoribosyltransferase (hpt) (Buchnera aphidicola subsp. Schizaphis graminum (strain Sg)).